We begin with the raw amino-acid sequence, 157 residues long: Protein Smg homolog (157 aa).

Belongs to the Smg family.

The protein is Protein Smg homolog of Shewanella denitrificans (strain OS217 / ATCC BAA-1090 / DSM 15013).